Reading from the N-terminus, the 721-residue chain is MFEPNMLLAAMNNADSNNHNYNHEDNNNEGFLRDDEFDSPNTKSGSENQEGGSGNDQDPLHPNKKKRYHRHTQLQIQEMEAFFKECPHPDDKQRKQLSRELNLEPLQVKFWFQNKRTQMKNHHERHENSHLRAENEKLRNDNLRYREALANASCPNCGGPTAIGEMSFDEHQLRLENARLREEIDRISAIAAKYVGKPVSNYPLMSPPPLPPRPLELAMGNIGGEAYGNNPNDLLKSITAPTESDKPVIIDLSVAAMEELMRMVQVDEPLWKSLVLDEEEYARTFPRGIGPRPAGYRSEASRESAVVIMNHVNIVEILMDVNQWSTIFAGMVSRAMTLAVLSTGVAGNYNGALQVMSAEFQVPSPLVPTRETYFARYCKQQGDGSWAVVDISLDSLQPNPPARCRRRASGCLIQELPNGYSKVTWVEHVEVDDRGVHNLYKHMVSTGHAFGAKRWVAILDRQCERLASVMATNISSGEVGVITNQEGRRSMLKLAERMVISFCAGVSASTAHTWTTLSGTGAEDVRVMTRKSVDDPGRPPGIVLSAATSFWIPVPPKRVFDFLRDENSRNEWDILSNGGVVQEMAHIANGRDTGNCVSLLRVNSANSSQSNMLILQESCTDPTASFVIYAPVDIVAMNIVLNGGDPDYVALLPSGFAILPDGNANSGAPGGDGGSLLTVAFQILVDSVPTAKLSLGSVATVNNLIACTVERIKASMSCETA.

The disordered stretch occupies residues 17-70 (NNHNYNHEDNNNEGFLRDDEFDSPNTKSGSENQEGGSGNDQDPLHPNKKKRYHR). Residues 21-34 (YNHEDNNNEGFLRD) are compositionally biased toward basic and acidic residues. Residues 64 to 123 (KKKRYHRHTQLQIQEMEAFFKECPHPDDKQRKQLSRELNLEPLQVKFWFQNKRTQMKNHH) constitute a DNA-binding region (homeobox). Residues 120–194 (KNHHERHENS…DRISAIAAKY (75 aa)) adopt a coiled-coil conformation. Residues 242–468 (TESDKPVIID…LDRQCERLAS (227 aa)) form the START domain.

The protein belongs to the HD-ZIP homeobox family. Class IV subfamily. In terms of assembly, interacts with AIL7/PLT7, ANT, BBM and AIL1. In terms of tissue distribution, expressed in hairless cell files of the hypocotyl epidermis. Expressed in shoot apical meristem (SAM) with higher levels in L1 cells and the epidermal layer of young leaves. Expressed in primary root tips, in the L1 of apical inflorescence meristems, early flower primordia, carpel epidermis, ovule primordia, nucellus, chalaze and seed coat.

It is found in the nucleus. In terms of biological role, probable transcription factor. Involved, together with PDF2, in the regulation of flower organs development by promoting the expression of APETALA 3 (AP3) in the epidermis and internal cell layers of developing flowers. This chain is Homeobox-leucine zipper protein HDG2, found in Arabidopsis thaliana (Mouse-ear cress).